The sequence spans 286 residues: Bifunctional protein FolD (286 aa).

Residues 160 to 162 (GRS), Ser-189, and Thr-230 each bind NADP(+).

The protein belongs to the tetrahydrofolate dehydrogenase/cyclohydrolase family. In terms of assembly, homodimer.

The catalysed reaction is (6R)-5,10-methylene-5,6,7,8-tetrahydrofolate + NADP(+) = (6R)-5,10-methenyltetrahydrofolate + NADPH. The enzyme catalyses (6R)-5,10-methenyltetrahydrofolate + H2O = (6R)-10-formyltetrahydrofolate + H(+). It participates in one-carbon metabolism; tetrahydrofolate interconversion. In terms of biological role, catalyzes the oxidation of 5,10-methylenetetrahydrofolate to 5,10-methenyltetrahydrofolate and then the hydrolysis of 5,10-methenyltetrahydrofolate to 10-formyltetrahydrofolate. The polypeptide is Bifunctional protein FolD (Chlamydia pneumoniae (Chlamydophila pneumoniae)).